The primary structure comprises 333 residues: DNA-directed RNA polymerase subunit alpha (333 aa).

Positions 1-234 are alpha N-terminal domain (alpha-NTD); that stretch reads MQISVNEFLT…QQLAAFVDLK (234 aa). An alpha C-terminal domain (alpha-CTD) region spans residues 248–333; it reads IDPILLRPVD…SLKKDDKATA (86 aa).

The protein belongs to the RNA polymerase alpha chain family. As to quaternary structure, homodimer. The RNAP catalytic core consists of 2 alpha, 1 beta, 1 beta' and 1 omega subunit. When a sigma factor is associated with the core the holoenzyme is formed, which can initiate transcription.

The catalysed reaction is RNA(n) + a ribonucleoside 5'-triphosphate = RNA(n+1) + diphosphate. In terms of biological role, DNA-dependent RNA polymerase catalyzes the transcription of DNA into RNA using the four ribonucleoside triphosphates as substrates. This chain is DNA-directed RNA polymerase subunit alpha, found in Ectopseudomonas mendocina (strain ymp) (Pseudomonas mendocina).